The following is a 546-amino-acid chain: Chaperonin GroEL (546 aa).

Residues 30–33 (TLGP), Lys-51, 87–91 (DGTTT), Gly-415, 479–481 (NAA), and Asp-495 contribute to the ATP site.

The protein belongs to the chaperonin (HSP60) family. Forms a cylinder of 14 subunits composed of two heptameric rings stacked back-to-back. Interacts with the co-chaperonin GroES.

It localises to the cytoplasm. It catalyses the reaction ATP + H2O + a folded polypeptide = ADP + phosphate + an unfolded polypeptide.. Together with its co-chaperonin GroES, plays an essential role in assisting protein folding. The GroEL-GroES system forms a nano-cage that allows encapsulation of the non-native substrate proteins and provides a physical environment optimized to promote and accelerate protein folding. The chain is Chaperonin GroEL from Pseudomonas putida (strain W619).